The following is a 151-amino-acid chain: Deoxyuridine 5'-triphosphate nucleotidohydrolase (151 aa).

Substrate is bound by residues 70–72 (RSG), Asn83, 87–89 (LID), and Met97.

Belongs to the dUTPase family. Mg(2+) is required as a cofactor.

The enzyme catalyses dUTP + H2O = dUMP + diphosphate + H(+). It functions in the pathway pyrimidine metabolism; dUMP biosynthesis; dUMP from dCTP (dUTP route): step 2/2. This enzyme is involved in nucleotide metabolism: it produces dUMP, the immediate precursor of thymidine nucleotides and it decreases the intracellular concentration of dUTP so that uracil cannot be incorporated into DNA. The chain is Deoxyuridine 5'-triphosphate nucleotidohydrolase from Pseudomonas fluorescens (strain Pf0-1).